We begin with the raw amino-acid sequence, 185 residues long: Peptidyl-tRNA hydrolase (185 aa).

Position 14 (Tyr14) interacts with tRNA. The active-site Proton acceptor is the His19. TRNA is bound by residues Tyr64, Asn66, and Asn112.

Belongs to the PTH family. Monomer.

Its subcellular location is the cytoplasm. It carries out the reaction an N-acyl-L-alpha-aminoacyl-tRNA + H2O = an N-acyl-L-amino acid + a tRNA + H(+). In terms of biological role, hydrolyzes ribosome-free peptidyl-tRNAs (with 1 or more amino acids incorporated), which drop off the ribosome during protein synthesis, or as a result of ribosome stalling. Its function is as follows. Catalyzes the release of premature peptidyl moieties from peptidyl-tRNA molecules trapped in stalled 50S ribosomal subunits, and thus maintains levels of free tRNAs and 50S ribosomes. The polypeptide is Peptidyl-tRNA hydrolase (Pediococcus pentosaceus (strain ATCC 25745 / CCUG 21536 / LMG 10740 / 183-1w)).